A 198-amino-acid chain; its full sequence is Imidazoleglycerol-phosphate dehydratase (198 aa).

The protein belongs to the imidazoleglycerol-phosphate dehydratase family.

Its subcellular location is the cytoplasm. It catalyses the reaction D-erythro-1-(imidazol-4-yl)glycerol 3-phosphate = 3-(imidazol-4-yl)-2-oxopropyl phosphate + H2O. Its pathway is amino-acid biosynthesis; L-histidine biosynthesis; L-histidine from 5-phospho-alpha-D-ribose 1-diphosphate: step 6/9. The chain is Imidazoleglycerol-phosphate dehydratase from Magnetococcus marinus (strain ATCC BAA-1437 / JCM 17883 / MC-1).